The primary structure comprises 158 residues: 2-C-methyl-D-erythritol 2,4-cyclodiphosphate synthase (158 aa).

A divalent metal cation contacts are provided by D8 and H10. 4-CDP-2-C-methyl-D-erythritol 2-phosphate is bound by residues 8-10 (DVH) and 34-35 (HS). An a divalent metal cation-binding site is contributed by H42. 4-CDP-2-C-methyl-D-erythritol 2-phosphate is bound by residues 56-58 (DIG), 61-65 (FPDTD), 100-106 (AQRPKMA), 132-135 (TTEE), F139, and R142.

Belongs to the IspF family. In terms of assembly, homotrimer. It depends on a divalent metal cation as a cofactor.

The catalysed reaction is 4-CDP-2-C-methyl-D-erythritol 2-phosphate = 2-C-methyl-D-erythritol 2,4-cyclic diphosphate + CMP. Its pathway is isoprenoid biosynthesis; isopentenyl diphosphate biosynthesis via DXP pathway; isopentenyl diphosphate from 1-deoxy-D-xylulose 5-phosphate: step 4/6. Functionally, involved in the biosynthesis of isopentenyl diphosphate (IPP) and dimethylallyl diphosphate (DMAPP), two major building blocks of isoprenoid compounds. Catalyzes the conversion of 4-diphosphocytidyl-2-C-methyl-D-erythritol 2-phosphate (CDP-ME2P) to 2-C-methyl-D-erythritol 2,4-cyclodiphosphate (ME-CPP) with a corresponding release of cytidine 5-monophosphate (CMP). This is 2-C-methyl-D-erythritol 2,4-cyclodiphosphate synthase from Pelobacter propionicus (strain DSM 2379 / NBRC 103807 / OttBd1).